A 299-amino-acid chain; its full sequence is Phosphatidylserine decarboxylase proenzyme (299 aa).

Residues Asp-90, His-147, and Ser-254 each act as charge relay system; for autoendoproteolytic cleavage activity in the active site. Ser-254 serves as the catalytic Schiff-base intermediate with substrate; via pyruvic acid; for decarboxylase activity. Ser-254 carries the pyruvic acid (Ser); by autocatalysis modification.

The protein belongs to the phosphatidylserine decarboxylase family. PSD-B subfamily. Prokaryotic type I sub-subfamily. Heterodimer of a large membrane-associated beta subunit and a small pyruvoyl-containing alpha subunit. Pyruvate serves as cofactor. Is synthesized initially as an inactive proenzyme. Formation of the active enzyme involves a self-maturation process in which the active site pyruvoyl group is generated from an internal serine residue via an autocatalytic post-translational modification. Two non-identical subunits are generated from the proenzyme in this reaction, and the pyruvate is formed at the N-terminus of the alpha chain, which is derived from the carboxyl end of the proenzyme. The autoendoproteolytic cleavage occurs by a canonical serine protease mechanism, in which the side chain hydroxyl group of the serine supplies its oxygen atom to form the C-terminus of the beta chain, while the remainder of the serine residue undergoes an oxidative deamination to produce ammonia and the pyruvoyl prosthetic group on the alpha chain. During this reaction, the Ser that is part of the protease active site of the proenzyme becomes the pyruvoyl prosthetic group, which constitutes an essential element of the active site of the mature decarboxylase.

The protein resides in the cell membrane. It carries out the reaction a 1,2-diacyl-sn-glycero-3-phospho-L-serine + H(+) = a 1,2-diacyl-sn-glycero-3-phosphoethanolamine + CO2. It participates in phospholipid metabolism; phosphatidylethanolamine biosynthesis; phosphatidylethanolamine from CDP-diacylglycerol: step 2/2. Catalyzes the formation of phosphatidylethanolamine (PtdEtn) from phosphatidylserine (PtdSer). The chain is Phosphatidylserine decarboxylase proenzyme from Erwinia tasmaniensis (strain DSM 17950 / CFBP 7177 / CIP 109463 / NCPPB 4357 / Et1/99).